We begin with the raw amino-acid sequence, 412 residues long: Lipid droplet organization protein LDO45 (412 aa).

Residues 1–170 lie on the Cytoplasmic side of the membrane; sequence MAARNRRKNN…TVEKLNALQN (170 aa). Residues 171–191 form a helical membrane-spanning segment; sequence SLYEVFWIIFIYLNYWFPNVG. The Lumenal segment spans residues 192–247; sequence DYVSNTFGQQDSIIIRISLSKSHFRALREKSSQKVQQAVKNIYFCFQEKPYLTAFK. A helical transmembrane segment spans residues 248 to 268; sequence VSFAIGLVIPCSLLFLIMVST. At 269-271 the chain is on the cytoplasmic side; the sequence is ATF. The helical transmembrane segment at 272–292 threads the bilayer; that stretch reads FFFVYLTLFVVIGFFSSLFII. A topological domain (lumenal) is located at residue Pro-293. Residues 294–314 form a helical membrane-spanning segment; sequence LLGISFVFAIGVVSFGFCSNM. Over 315–412 the chain is Cytoplasmic; it reads SFKMAQLIYV…NKAGNKFQLS (98 aa). The tract at residues 347–374 is disordered; it reads QEPQEPLSTLRPVSNPTIPSPLRQTARP. Over residues 357–373 the composition is skewed to polar residues; it reads RPVSNPTIPSPLRQTAR.

As to quaternary structure, interacts specifically with the seipin complex FLD1-LDB16. Only a fraction appears to associate with the seipin core components, suggesting that it may be an ancillary subunit of the complex.

Its subcellular location is the endoplasmic reticulum membrane. It localises to the lipid droplet. Functionally, involved in lipid droplet (LD) organization. Modulates triglyceride (TAG) storage by reducing DGA1 LD localization. Promotes LD targeting of some proteins, including PDR16. This Saccharomyces cerevisiae (strain ATCC 204508 / S288c) (Baker's yeast) protein is Lipid droplet organization protein LDO45.